The following is a 644-amino-acid chain: DNA mismatch repair protein MutL (644 aa).

Residues 336-400 form a disordered region; the sequence is ERPFEPSSPQ…EISRDSSLGE (65 aa). Residues 373–400 show a composition bias toward basic and acidic residues; sequence SKTHSTWDEASRVDTSRAEISRDSSLGE.

It belongs to the DNA mismatch repair MutL/HexB family.

Its function is as follows. This protein is involved in the repair of mismatches in DNA. It is required for dam-dependent methyl-directed DNA mismatch repair. May act as a 'molecular matchmaker', a protein that promotes the formation of a stable complex between two or more DNA-binding proteins in an ATP-dependent manner without itself being part of a final effector complex. The chain is DNA mismatch repair protein MutL from Shewanella sp. (strain MR-7).